The chain runs to 294 residues: Cyclin-dependent kinase A-1 (294 aa).

The Protein kinase domain occupies 4–287; the sequence is YEKEEKIGEG…ARQALEHEYF (284 aa). Residues 10 to 18 and Lys-33 each bind ATP; that span reads IGEGTYGVV. Position 14 is a phosphothreonine (Thr-14). Tyr-15 is modified (phosphotyrosine). The active-site Proton acceptor is Asp-127. Thr-161 is subject to Phosphothreonine; by CAK.

This sequence belongs to the protein kinase superfamily. CMGC Ser/Thr protein kinase family. CDC2/CDKX subfamily. Phosphorylated at Thr-161 by CDKD-1. As to expression, expressed in the dividing region of the root apex and in differentiated cells such as those in the sclerenchyma, pericycle and parenchyma of the central cylinder.

It carries out the reaction L-seryl-[protein] + ATP = O-phospho-L-seryl-[protein] + ADP + H(+). The catalysed reaction is L-threonyl-[protein] + ATP = O-phospho-L-threonyl-[protein] + ADP + H(+). The enzyme catalyses [DNA-directed RNA polymerase] + ATP = phospho-[DNA-directed RNA polymerase] + ADP + H(+). The protein is Cyclin-dependent kinase A-1 (CDKA-1) of Oryza sativa subsp. japonica (Rice).